The chain runs to 390 residues: S-adenosylmethionine synthase 2 (390 aa).

Glutamate 9 provides a ligand contact to Mg(2+). An ATP-binding site is contributed by histidine 15. A K(+)-binding site is contributed by glutamate 43. Glutamate 56 and glutamine 99 together coordinate L-methionine. Residues 167–169 (DGK), 235–238 (SGRF), aspartate 246, 252–253 (RK), alanine 269, lysine 273, and lysine 277 contribute to the ATP site. Aspartate 246 is an L-methionine binding site. Lysine 277 lines the L-methionine pocket.

It belongs to the AdoMet synthase family. In terms of assembly, homotetramer. The cofactor is Mn(2+). Mg(2+) is required as a cofactor. Requires Co(2+) as cofactor. K(+) serves as cofactor.

The protein resides in the cytoplasm. The catalysed reaction is L-methionine + ATP + H2O = S-adenosyl-L-methionine + phosphate + diphosphate. Its pathway is amino-acid biosynthesis; S-adenosyl-L-methionine biosynthesis; S-adenosyl-L-methionine from L-methionine: step 1/1. Functionally, catalyzes the formation of S-adenosylmethionine from methionine and ATP. The reaction comprises two steps that are both catalyzed by the same enzyme: formation of S-adenosylmethionine (AdoMet) and triphosphate, and subsequent hydrolysis of the triphosphate. In Nicotiana tabacum (Common tobacco), this protein is S-adenosylmethionine synthase 2 (SAMS2).